Here is a 119-residue protein sequence, read N- to C-terminus: Promotilin (119 aa).

The first 25 residues, 1–25 (MVSRKAVVVLLVVHAAAMLASHTEA), serve as a signal peptide directing secretion. The segment at 40-72 (EKERNKGQKKSLSVQQASEELGPLDPSEPTKEE) is disordered.

It belongs to the motilin family.

Its subcellular location is the secreted. Its function is as follows. Plays an important role in the regulation of interdigestive gastrointestinal motility and indirectly causes rhythmic contraction of duodenal and colonic smooth muscle. This is Promotilin (MLN) from Sus scrofa (Pig).